The following is a 165-amino-acid chain: SsrA-binding protein (165 aa).

Residues 135–158 (QAHDKRQDMARRDAQREVTRELGR) show a composition bias toward basic and acidic residues. The tract at residues 135 to 165 (QAHDKRQDMARRDAQREVTRELGRRVKGMTN) is disordered.

This sequence belongs to the SmpB family.

It localises to the cytoplasm. In terms of biological role, required for rescue of stalled ribosomes mediated by trans-translation. Binds to transfer-messenger RNA (tmRNA), required for stable association of tmRNA with ribosomes. tmRNA and SmpB together mimic tRNA shape, replacing the anticodon stem-loop with SmpB. tmRNA is encoded by the ssrA gene; the 2 termini fold to resemble tRNA(Ala) and it encodes a 'tag peptide', a short internal open reading frame. During trans-translation Ala-aminoacylated tmRNA acts like a tRNA, entering the A-site of stalled ribosomes, displacing the stalled mRNA. The ribosome then switches to translate the ORF on the tmRNA; the nascent peptide is terminated with the 'tag peptide' encoded by the tmRNA and targeted for degradation. The ribosome is freed to recommence translation, which seems to be the essential function of trans-translation. This Mycolicibacterium gilvum (strain PYR-GCK) (Mycobacterium gilvum (strain PYR-GCK)) protein is SsrA-binding protein.